The chain runs to 466 residues: MSHSYDYDAIVIGSGPGGEGAAMGLVKQGARVAVIERYHNVGGGCTHWGTIPSKALRHAVSRIIEFNQNPLYSDHSRLLRSSFADILNHADTVINQQTRMRQGFYERNHCEILQGDAHFVDEHTLALKCHDGSVETITAEKFVIACGSRPYHPDDVDFSHPRVYDSDSILSLHHEPRHVLIYGAGVIGCEYASIFRGMEVKVDLINTRDRLLAFLDQEMSDSLSYHFWNSGVVIRHNEEYERIEACDDGVIMHLKSGKKLKADCLLYANGRTGNTDSLALENIGLTTDSRGQLKVNSMYQTALPHIYAVGDVIGYPSLASAAYDQGRIAAQALVKGEATAHLIEDIPTGIYTIPEISSVGKTEQQLTSMKVPYEVGRAQFKHLARAQIVGMSVGTLKILFHRETKEILGIHCFGERAAEIIHIGQAIMEQKGGGNTIEYFVNTTFNYPTMAEAYRVAALNGLNRLF.

36 to 45 (ERYHNVGGGC) serves as a coordination point for FAD.

Belongs to the class-I pyridine nucleotide-disulfide oxidoreductase family. FAD serves as cofactor.

It localises to the cytoplasm. It carries out the reaction NAD(+) + NADPH = NADH + NADP(+). Its function is as follows. Conversion of NADPH, generated by peripheral catabolic pathways, to NADH, which can enter the respiratory chain for energy generation. The sequence is that of Soluble pyridine nucleotide transhydrogenase from Enterobacter sp. (strain 638).